The primary structure comprises 331 residues: UPF0324 membrane protein SA0329 (331 aa).

The next 11 helical transmembrane spans lie at 9-26 (FMIG…SFLA), 31-48 (ILDK…AILY), 69-88 (LLRF…DIIG), 93-115 (LLAI…NKLL), 122-144 (ALLL…APIF), 154-176 (SIGI…YAIF), 183-202 (YGAW…LAGG), 217-234 (LGRV…ILIM), 247-269 (ISIP…VTIP), 273-295 (LNIL…GLNV), and 308-330 (LMTI…HWLY).

The protein belongs to the UPF0324 family.

Its subcellular location is the cell membrane. This chain is UPF0324 membrane protein SA0329, found in Staphylococcus aureus (strain N315).